The chain runs to 390 residues: Period circadian protein (390 aa).

Disordered stretches follow at residues 27–120, 164–188, 247–266, and 327–356; these read VTAP…APPV, LEYSGPGPGHGHGIKRGGSHSWEGE, GGNGNVGSGNGNNNQASTNQ, and SPSGTNPSPNRPHKHAHVHSSSEKPSTSQA. Positions 93 to 114 are enriched in gly residues; that stretch reads GTSGTGNSGDGGGGGGADGTGS. The segment covering 247–256 has biased composition (gly residues); the sequence is GGNGNVGSGN.

Forms a heterodimer with timeless (TIM); the complex then translocates into the nucleus. Post-translationally, phosphorylated with a circadian rhythmicity, probably by the double-time protein (dbt). Phosphorylation could be implicated in the stability of per monomer and in the formation of heterodimer per-tim.

It localises to the nucleus. The protein localises to the cytoplasm. The protein resides in the perinuclear region. Essential for biological clock functions. Determines the period length of circadian and ultradian rhythms; an increase in PER dosage leads to shortened circadian rhythms and a decrease leads to lengthened circadian rhythms. Essential for the circadian rhythmicity of locomotor activity, eclosion behavior, and for the rhythmic component of the male courtship song that originates in the thoracic nervous system. The biological cycle depends on the rhythmic formation and nuclear localization of the TIM-PER complex. Light induces the degradation of TIM, which promotes elimination of PER. Nuclear activity of the heterodimer coordinatively regulates PER and TIM transcription through a negative feedback loop. Behaves as a negative element in circadian transcriptional loop. Does not appear to bind DNA, suggesting indirect transcriptional inhibition. This Drosophila tropicalis (Fruit fly) protein is Period circadian protein (per).